The sequence spans 244 residues: Gamma-gliadin (244 aa).

Positions 18–64 (QQPFLQQPQQPSPQPQQVVQIISPATPTTIPSAGKPTSAPFPQQQQQ) are disordered. The segment covering 35 to 48 (VVQIISPATPTTIP) has biased composition (polar residues).

It belongs to the gliadin/glutenin family.

Its function is as follows. Gliadin is the major seed storage protein in wheat. The protein is Gamma-gliadin of Triticum aestivum (Wheat).